Consider the following 126-residue polypeptide: MPEPAKSAPAPKKGSKKAVTKTQKKGDKKRRKTRKESYSIYVYKVLKQVHPDTGISSKAMGIMNSFVNDIFERIAGEASRLAHYNKRSTITSREIQTAVRLLLPGELAKHAVSEGTKAVTKYTSSK.

The span at 1-12 (MPEPAKSAPAPK) shows a compositional bias: low complexity. Residues 1–35 (MPEPAKSAPAPKKGSKKAVTKTQKKGDKKRRKTRK) are disordered. An N6-acetyllysine mark is found at Lys-6 and Lys-13. Basic residues predominate over residues 13–34 (KGSKKAVTKTQKKGDKKRRKTR). Ser-15 bears the Phosphoserine mark. Lys-16 and Lys-21 each carry N6-acetyllysine. Ser-113 carries O-linked (GlcNAc) serine glycosylation. Lys-121 is covalently cross-linked (Glycyl lysine isopeptide (Lys-Gly) (interchain with G-Cter in ubiquitin)).

It belongs to the histone H2B family. In terms of assembly, the nucleosome is a histone octamer containing two molecules each of H2A, H2B, H3 and H4 assembled in one H3-H4 heterotetramer and two H2A-H2B heterodimers. The octamer wraps approximately 147 bp of DNA. Monoubiquitination of Lys-121 by the BRE1 gives a specific tag for epigenetic transcriptional activation and is also prerequisite for histone H3 'Lys-4' and 'Lys-79' methylation. Post-translationally, phosphorylated on Ser-15 during apoptosis; which facilitates apoptotic chromatin condensation. In terms of processing, glcNAcylation at Ser-113 promotes monoubiquitination of Lys-121. It fluctuates in response to extracellular glucose, and associates with transcribed genes.

The protein resides in the nucleus. It is found in the chromosome. Its function is as follows. Core component of nucleosome. Nucleosomes wrap and compact DNA into chromatin, limiting DNA accessibility to the cellular machineries which require DNA as a template. Histones thereby play a central role in transcription regulation, DNA repair, DNA replication and chromosomal stability. DNA accessibility is regulated via a complex set of post-translational modifications of histones, also called histone code, and nucleosome remodeling. This is Histone H2B 8 (H2B-VIII) from Gallus gallus (Chicken).